The following is a 279-amino-acid chain: uncharacterized protein (279 aa).

The tract at residues 1-28 is disordered; sequence MGLFGGGNSKSTSNQTTNNENTNIATQG. A compositionally biased stretch (low complexity) spans 9 to 23; the sequence is SKSTSNQTTNNENTN. The helical transmembrane segment at 256 to 273 threads the bilayer; it reads KTLMIGIVAVSAAVGLYA.

It localises to the host membrane. This is an uncharacterized protein from Pseudoalteromonas espejiana (Bacteriophage PM2).